Reading from the N-terminus, the 1106-residue chain is Translation initiation factor IF-2 (1106 aa).

Low complexity-rich tracts occupy residues 57 to 72 (GKAA…PDAG) and 81 to 97 (APST…SAPP). Disordered regions lie at residues 57-434 (GKAA…QKVH) and 466-497 (PSKP…RQRR). 2 stretches are compositionally biased toward pro residues: residues 113–123 (PAKPAPSAPPS) and 138–148 (PAKPAPSAPPS). The segment covering 172 to 199 (AKPVAKPASAPAPARPAQPLRPQASNRP) has biased composition (low complexity). 2 stretches are compositionally biased toward pro residues: residues 200-214 (PQQP…PAAK) and 223-235 (TAPP…PGAP). Composition is skewed to low complexity over residues 251–292 (PNQQ…QQRR), 319–329 (PQGRQGGAPSR), and 395–405 (YRPAAAPGMAG). Residues 408 to 422 (RRPDWDDSARLDALR) show a composition bias toward basic and acidic residues. Residues 482 to 497 (ALRRRKKETTRQRQRR) show a composition bias toward basic residues. In terms of domain architecture, tr-type G spans 598–771 (RRPPVVTVMG…LLVTEVEDLK (174 aa)). The G1 stretch occupies residues 607–614 (GHVDHGKT). Residue 607–614 (GHVDHGKT) coordinates GTP. A G2 region spans residues 632–636 (GITQH). Residues 657 to 660 (DTPG) are G3. GTP contacts are provided by residues 657-661 (DTPGH) and 711-714 (NKVD). Positions 711–714 (NKVD) are G4. The interval 747–749 (SAL) is G5.

It belongs to the TRAFAC class translation factor GTPase superfamily. Classic translation factor GTPase family. IF-2 subfamily.

Its subcellular location is the cytoplasm. In terms of biological role, one of the essential components for the initiation of protein synthesis. Protects formylmethionyl-tRNA from spontaneous hydrolysis and promotes its binding to the 30S ribosomal subunits. Also involved in the hydrolysis of GTP during the formation of the 70S ribosomal complex. In Synechococcus sp. (strain RCC307), this protein is Translation initiation factor IF-2.